The sequence spans 78 residues: Small ribosomal subunit protein bS18 (78 aa).

It belongs to the bacterial ribosomal protein bS18 family. In terms of assembly, part of the 30S ribosomal subunit. Forms a tight heterodimer with protein bS6.

Its function is as follows. Binds as a heterodimer with protein bS6 to the central domain of the 16S rRNA, where it helps stabilize the platform of the 30S subunit. This Kocuria rhizophila (strain ATCC 9341 / DSM 348 / NBRC 103217 / DC2201) protein is Small ribosomal subunit protein bS18.